We begin with the raw amino-acid sequence, 288 residues long: F420-non-reducing hydrogenase vhu subunit G (288 aa).

Belongs to the [NiFe]/[NiFeSe] hydrogenase small subunit family. The F420-non-reducing hydrogenase vhu is composed of four subunits; VhuA, VhuD, VhuG and VhuU.

The chain is F420-non-reducing hydrogenase vhu subunit G (vhuG) from Methanocaldococcus jannaschii (strain ATCC 43067 / DSM 2661 / JAL-1 / JCM 10045 / NBRC 100440) (Methanococcus jannaschii).